The primary structure comprises 490 residues: MTENNEHLALWGGRFTSGPSPELARLSKSTQFDWRLADDDIAGSRAHARALGRAGLLTADELQRMEDALDTLQRHVDDGSFAPIEDDEDEATALERGLIDIAGDELGGKLRAGRSRNDQIACLIRMWLRRHSRAIAGLLLDLVNALIEQSEKAGRTVMPGRTHMQHAQPVLLAHQLMAHAWPLIRDVQRLIDWDKRINASPYGSGALAGNTLGLDPEAVARELGFSRVTDNSIDGTAARDLVAEFAFVAAMTGVDISRLSEEIIIWNTQEFAFVKLDDGYSTGSSIMPQKKNPDIAELARGKSGRLIGDLTGLLSTLKGLPTAYARDLQEDKEAVFDQVDTLEVLLPAFTGMVKTMHFDGDRLEEEAPTGFALATDIAEWLVKNGVPFRHAHELSGACVKLAEGRGQELWDLTDNDFIETFAAFLPADKAPGVREVLSSHGSVDSRNGKGGTAYGRVREQIADAKAEVEELKLFPASTSDGSAYKAPGTF.

The protein belongs to the lyase 1 family. Argininosuccinate lyase subfamily.

It localises to the cytoplasm. The catalysed reaction is 2-(N(omega)-L-arginino)succinate = fumarate + L-arginine. It participates in amino-acid biosynthesis; L-arginine biosynthesis; L-arginine from L-ornithine and carbamoyl phosphate: step 3/3. The chain is Argininosuccinate lyase from Bifidobacterium longum subsp. infantis (strain ATCC 15697 / DSM 20088 / JCM 1222 / NCTC 11817 / S12).